The chain runs to 607 residues: UvrABC system protein C (607 aa).

Residues 11-89 (CKPGVYRFED…IKEFAPPCNV (79 aa)) enclose the GIY-YIG domain. The UVR domain maps to 201 to 236 (SSLLESLKKKMLKASKNKEYEEAAILRDKIQAAQTV).

The protein belongs to the UvrC family. In terms of assembly, interacts with UvrB in an incision complex.

The protein resides in the cytoplasm. Functionally, the UvrABC repair system catalyzes the recognition and processing of DNA lesions. UvrC both incises the 5' and 3' sides of the lesion. The N-terminal half is responsible for the 3' incision and the C-terminal half is responsible for the 5' incision. The polypeptide is UvrABC system protein C (Tropheryma whipplei (strain Twist) (Whipple's bacillus)).